The sequence spans 349 residues: tRNA pseudouridine synthase D (349 aa).

F27 is a binding site for substrate. D80 serves as the catalytic Nucleophile. N129 is a substrate binding site. Positions 155-303 constitute a TRUD domain; that stretch reads GVPNYFGAQR…VEAARRAMLL (149 aa). F329 contacts substrate.

The protein belongs to the pseudouridine synthase TruD family.

It catalyses the reaction uridine(13) in tRNA = pseudouridine(13) in tRNA. In terms of biological role, responsible for synthesis of pseudouridine from uracil-13 in transfer RNAs. The chain is tRNA pseudouridine synthase D from Shigella boydii serotype 4 (strain Sb227).